Reading from the N-terminus, the 769-residue chain is Serine/threonine-protein kinase PLK4 (769 aa).

Positions 14–267 (YEVQHLLGKG…LEAVLCHPFM (254 aa)) constitute a Protein kinase domain. ATP contacts are provided by residues 20–28 (LGKGGFATV) and Lys43. The active-site Proton acceptor is the Asp138. One can recognise a Cryptic POLO box 1 (CPB1) domain in the interval 381–498 (EDRISVPPLN…ARFVGLVKSK (118 aa)). The Cryptic POLO box 2 (CPB2) domain maps to 499-602 (TPKVTYFSTL…GRRPITDVQP (104 aa)). Positions 660–739 (PIKRINVPDI…IPNIQLKLKT (80 aa)) constitute a POLO box domain.

The protein belongs to the protein kinase superfamily. Ser/Thr protein kinase family. CDC5/Polo subfamily. In terms of assembly, homodimer. Ubiquitinated by the SCF(Slimb) ubiquitin ligase complex; leading to its degradation by the proteasome during interphase and regulating centriole number and ensuring the block to centriole reduplication.

The protein localises to the cytoplasm. It is found in the cytoskeleton. It localises to the microtubule organizing center. Its subcellular location is the centrosome. The protein resides in the centriole. The enzyme catalyses L-seryl-[protein] + ATP = O-phospho-L-seryl-[protein] + ADP + H(+). It catalyses the reaction L-threonyl-[protein] + ATP = O-phospho-L-threonyl-[protein] + ADP + H(+). In terms of biological role, serine/threonine-protein kinase that plays a central role in centriole duplication. Able to trigger procentriole formation on the surface of the mother centriole cylinder, using mother centriole as a platform, leading to the recruitment of centriole biogenesis proteins such as sas-6. When overexpressed, it is able to induce centrosome amplification through the simultaneous generation of multiple procentrioles adjoining each parental centriole during S phase. Centrosome amplification following overexpression can initiate tumorigenesis, highlighting the importance of centrosome regulation in cancers. This chain is Serine/threonine-protein kinase PLK4 (SAK), found in Drosophila simulans (Fruit fly).